The following is a 137-amino-acid chain: Small ribosomal subunit protein uS12 (137 aa).

Residues 1 to 55 (MPTINQLVRKPRQSKIKKSDSPALNKGFNSKKKKFTDLNSPQKRGVCTRVGTMTP) are disordered. Asp-102 is subject to 3-methylthioaspartic acid. The disordered stretch occupies residues 118–137 (SGVDGRRQGRSLYGTKKPKN).

Belongs to the universal ribosomal protein uS12 family. As to quaternary structure, part of the 30S ribosomal subunit. Contacts proteins S8 and S17. May interact with IF1 in the 30S initiation complex.

Its function is as follows. With S4 and S5 plays an important role in translational accuracy. In terms of biological role, interacts with and stabilizes bases of the 16S rRNA that are involved in tRNA selection in the A site and with the mRNA backbone. Located at the interface of the 30S and 50S subunits, it traverses the body of the 30S subunit contacting proteins on the other side and probably holding the rRNA structure together. The combined cluster of proteins S8, S12 and S17 appears to hold together the shoulder and platform of the 30S subunit. The protein is Small ribosomal subunit protein uS12 of Staphylococcus aureus (strain Mu3 / ATCC 700698).